A 520-amino-acid chain; its full sequence is Cholesterol side-chain cleavage enzyme, mitochondrial (520 aa).

A mitochondrion-targeting transit peptide spans 1 to 39 (MLVRGLPLRSVLVKGCQPLLSAPREGPGHPRVPTGEGAG). The interval 19–47 (LLSAPREGPGHPRVPTGEGAGMSSHSPRP) is disordered. Heme is bound at residue cysteine 461.

Belongs to the cytochrome P450 family. Interacts with FDX1/adrenodoxin. Requires heme as cofactor.

The protein localises to the mitochondrion inner membrane. The enzyme catalyses 6 reduced [adrenodoxin] + cholesterol + 3 O2 + 6 H(+) = 4-methylpentanal + pregnenolone + 6 oxidized [adrenodoxin] + 4 H2O. The catalysed reaction is 2 reduced [adrenodoxin] + cholesterol + O2 + 2 H(+) = (22R)-hydroxycholesterol + 2 oxidized [adrenodoxin] + H2O. It carries out the reaction (22R)-hydroxycholesterol + 2 reduced [adrenodoxin] + O2 + 2 H(+) = (20R,22R)-20,22-dihydroxycholesterol + 2 oxidized [adrenodoxin] + H2O. It catalyses the reaction (20R,22R)-20,22-dihydroxycholesterol + 2 reduced [adrenodoxin] + O2 + 2 H(+) = 4-methylpentanal + pregnenolone + 2 oxidized [adrenodoxin] + 2 H2O. It participates in lipid metabolism; C21-steroid hormone metabolism. The protein operates within steroid metabolism; cholesterol metabolism. A cytochrome P450 monooxygenase that catalyzes the side-chain hydroxylation and cleavage of cholesterol to pregnenolone, the precursor of most steroid hormones. Catalyzes three sequential oxidation reactions of cholesterol, namely the hydroxylation at C22 followed with the hydroxylation at C20 to yield 20R,22R-hydroxycholesterol that is further cleaved between C20 and C22 to yield the C21-steroid pregnenolone and 4-methylpentanal. Mechanistically, uses molecular oxygen inserting one oxygen atom into a substrate and reducing the second into a water molecule. Two electrons are provided by NADPH via a two-protein mitochondrial transfer system comprising flavoprotein FDXR (adrenodoxin/ferredoxin reductase) and nonheme iron-sulfur protein FDX1 or FDX2 (adrenodoxin/ferredoxin). This Equus caballus (Horse) protein is Cholesterol side-chain cleavage enzyme, mitochondrial (CYP11A1).